The chain runs to 727 residues: Putative inactive disease susceptibility protein LOV1 (727 aa).

One can recognise an NB-ARC domain in the interval 44–336; it reads EQSVEALAGH…AAEGIITSSD (293 aa). LRR repeat units lie at residues 459-484, 485-507, 509-530, 575-600, and 601-626; these read LPLLRVLDLSRVKFEGGKLPSSIGDL, IHLRFLSLHRAWISHLPSSLRNL, LLLYLNLGFNGMVHVPNVLKEM, MTKLRELSLFITDGSSDTLSSSLGQL, and RSLEVLHLYDRQEPRVAYHGGEIVLN.

This sequence belongs to the disease resistance NB-LRR family. RPP8/HRT subfamily.

The chain is Putative inactive disease susceptibility protein LOV1 (LOV1) from Arabidopsis thaliana (Mouse-ear cress).